We begin with the raw amino-acid sequence, 330 residues long: Probable cytosolic iron-sulfur protein assembly protein ciao1 (330 aa).

7 WD repeats span residues 14 to 53, 59 to 98, 103 to 142, 148 to 187, 192 to 231, 244 to 283, and 295 to 330; these read HPDS…WECK, GHQR…FECL, GHEN…EYEC, SHTQ…WECR, GHES…DGSS, FHGR…DPEQ, and AHNQ…YNSA.

Belongs to the WD repeat CIA1 family. In terms of assembly, component of the CIA complex.

Functionally, key component of the cytosolic iron-sulfur protein assembly (CIA) complex, a multiprotein complex that mediates the incorporation of iron-sulfur cluster into extramitochondrial Fe/S proteins. The protein is Probable cytosolic iron-sulfur protein assembly protein ciao1 (ciao1) of Danio rerio (Zebrafish).